The sequence spans 1451 residues: Dicer-like protein 2 (1451 aa).

Residues 34-53 (YDGHLSEEDSPGGKPRPKEQ) form a disordered region. Residues 70 to 247 (MLEASLKENI…LKRLESTLDA (178 aa)) enclose the Helicase ATP-binding domain. 83–90 (MDTGSGKT) lines the ATP pocket. The DEAH box signature appears at 190–193 (DEAH). The Helicase C-terminal domain occupies 412–582 (KVQRIIEVLL…RLEAIENSEA (171 aa)). One can recognise a Dicer dsRNA-binding fold domain in the interval 603–704 (AKSHLQHFVS…LPLRDRLELE (102 aa)). RNase III domains follow at residues 968–1111 (AAEL…VDGG) and 1153–1351 (LQLL…VDAG). Mg(2+) is bound at residue E1192. The disordered stretch occupies residues 1253–1272 (EGDSDSKSSGDSTSDKASPR). Mg(2+) contacts are provided by D1337 and E1340.

Belongs to the helicase family. Dicer subfamily. The cofactor is Mg(2+). Mn(2+) is required as a cofactor.

Functionally, dicer-like endonuclease involved in cleaving double-stranded RNA in the RNA interference (RNAi) pathway. Produces 21 to 25 bp dsRNAs (siRNAs) which target the selective destruction of homologous RNAs leading to sequence-specific suppression of gene expression, called post-transcriptional gene silencing (PTGS). Part of a broad host defense, DCL-2 is involved in antiviral defense against mycoviruses like the hypovirus CHV1-EP713 and the reovirus MyRV1-Cp9B21. The chain is Dicer-like protein 2 (DCL-2) from Cryphonectria parasitica (Chestnut blight fungus).